The chain runs to 258 residues: Tryptophan synthase alpha chain (258 aa).

Active-site proton acceptor residues include Glu50 and Asp61.

The protein belongs to the TrpA family. Tetramer of two alpha and two beta chains.

The enzyme catalyses (1S,2R)-1-C-(indol-3-yl)glycerol 3-phosphate + L-serine = D-glyceraldehyde 3-phosphate + L-tryptophan + H2O. It participates in amino-acid biosynthesis; L-tryptophan biosynthesis; L-tryptophan from chorismate: step 5/5. The alpha subunit is responsible for the aldol cleavage of indoleglycerol phosphate to indole and glyceraldehyde 3-phosphate. The sequence is that of Tryptophan synthase alpha chain from Clostridium beijerinckii (strain ATCC 51743 / NCIMB 8052) (Clostridium acetobutylicum).